A 168-amino-acid chain; its full sequence is Regulatory protein RecX (168 aa).

It belongs to the RecX family.

It is found in the cytoplasm. Modulates RecA activity. This Serratia proteamaculans (strain 568) protein is Regulatory protein RecX.